The chain runs to 713 residues: P-loop NTPase domain-containing protein LPA1 homolog (713 aa).

3 disordered regions span residues 218–249, 504–575, and 650–713; these read AKKR…PIGK, TSQA…EDLS, and LDSP…APDK. The segment covering 231–246 has biased composition (basic and acidic residues); it reads DFDKTRPLNDKPDGKP. Residues 504–531 are compositionally biased toward polar residues; that stretch reads TSQAGSVNESWDNANEGTGSHVPSSSGS. Positions 533 to 544 are enriched in basic and acidic residues; it reads KKLDGHCKEIKE. Residues 551-562 show a composition bias toward acidic residues; it reads SDDDEEEEEEAA. Over residues 656-668 the composition is skewed to low complexity; sequence ARSSSALPISASS.

Functionally, required for the accumulation of phytic acid in seeds. Phytic acid is the primary storage form of phosphorus in cereal grains and other plant seeds. The protein is P-loop NTPase domain-containing protein LPA1 homolog of Oryza sativa subsp. japonica (Rice).